The primary structure comprises 384 residues: MPDTSAFSATTRPYFATVARGLEAIAAQELTELGAEQVKPEFAGVAFIGDRALLYRINLWSRLIYRVLMPMATVKAFNAQDLYRSIKKIDWDEYFSPEQTLQINCTGKNPQLNHSHFTALQVKNAIVDQQRDRYQRRSSVDLEQPDIVINAHIHQNHCQLSLDSTGFSLHRRGYRPALGNAPLKETLASALLTMAGWTPELPLYDPLCGSGTFLLEAGLQSLNIAPGKFQPGFCFQQWPDFDQDLWHSLLQTAKAGERDTLQAPLWGSDGDREVIQAAKSNAQQCQLGGKIHWQKLNFADIEPPAAEGVLICNPPYGKRIGQEEALGDFYQQIGDVLKQRFRGWTAFVFSGNKALTKRIGLRTSARFPVNNGGLPCTLLKYELY.

Residues 53 to 164 (LLYRINLWSR…QNHCQLSLDS (112 aa)) enclose the THUMP domain.

Belongs to the methyltransferase superfamily.

In Synechocystis sp. (strain ATCC 27184 / PCC 6803 / Kazusa), this protein is Putative RNA methyltransferase slr0064.